The following is a 282-amino-acid chain: Acyl-CoA-binding domain-containing protein 6 (282 aa).

The segment at 1 to 39 (MATPFLPSGATTGDSGGELSSGDDSGDMESFQTPEAEGT) is disordered. The residue at position 41 (serine 41) is a Phosphoserine. The 86-residue stretch at 42–127 (LAELFEKAAA…VKKLDPGWNP (86 aa)) folds into the ACB domain. An acyl-CoA-binding positions include 69 to 73 (YARFK) and lysine 95. Serine 106 is subject to Phosphoserine. Tyrosine 114 contributes to the an acyl-CoA binding site. ANK repeat units lie at residues 191-220 (EGRA…GINC) and 224-253 (EGQT…DPTL).

As to quaternary structure, monomer.

It localises to the cytoplasm. Its subcellular location is the nucleus. Binds long-chain acyl-coenzyme A molecules with a strong preference for unsaturated C18:1-CoA, lower affinity for unsaturated C20:4-CoA, and very weak affinity for saturated C16:0-CoA. Does not bind fatty acids. Plays a role in protein N-myristoylation. This Mus musculus (Mouse) protein is Acyl-CoA-binding domain-containing protein 6 (Acbd6).